A 266-amino-acid chain; its full sequence is Hydroxyethylthiazole kinase (266 aa).

Met45 is a binding site for substrate. ATP-binding residues include Arg120 and Thr165. Ala192 contacts substrate.

It belongs to the Thz kinase family. It depends on Mg(2+) as a cofactor.

It carries out the reaction 5-(2-hydroxyethyl)-4-methylthiazole + ATP = 4-methyl-5-(2-phosphooxyethyl)-thiazole + ADP + H(+). Its pathway is cofactor biosynthesis; thiamine diphosphate biosynthesis; 4-methyl-5-(2-phosphoethyl)-thiazole from 5-(2-hydroxyethyl)-4-methylthiazole: step 1/1. Its function is as follows. Catalyzes the phosphorylation of the hydroxyl group of 4-methyl-5-beta-hydroxyethylthiazole (THZ). The chain is Hydroxyethylthiazole kinase from Psychrobacter sp. (strain PRwf-1).